A 66-amino-acid chain; its full sequence is Large ribosomal subunit protein bL35 (66 aa).

Over residues 1–15 (MSKMKTKSGAKKRFK) the composition is skewed to basic residues. Positions 1 to 35 (MSKMKTKSGAKKRFKLTASGKVKAGQAGKRHGMIK) are disordered.

This sequence belongs to the bacterial ribosomal protein bL35 family.

This Maricaulis maris (strain MCS10) (Caulobacter maris) protein is Large ribosomal subunit protein bL35.